Consider the following 390-residue polypeptide: Succinate--CoA ligase [ADP-forming] subunit beta (390 aa).

The region spanning 9 to 248 (KEILRRHKAN…ITEEDPLEVQ (240 aa)) is the ATP-grasp domain. ATP is bound by residues lysine 50, 57-59 (GRG), glutamate 103, isoleucine 106, and glutamate 111. Mg(2+)-binding residues include asparagine 203 and aspartate 217. Residues asparagine 268 and 325-327 (GIV) contribute to the substrate site.

Belongs to the succinate/malate CoA ligase beta subunit family. In terms of assembly, heterotetramer of two alpha and two beta subunits. Mg(2+) serves as cofactor.

The catalysed reaction is succinate + ATP + CoA = succinyl-CoA + ADP + phosphate. It catalyses the reaction GTP + succinate + CoA = succinyl-CoA + GDP + phosphate. It functions in the pathway carbohydrate metabolism; tricarboxylic acid cycle; succinate from succinyl-CoA (ligase route): step 1/1. Functionally, succinyl-CoA synthetase functions in the citric acid cycle (TCA), coupling the hydrolysis of succinyl-CoA to the synthesis of either ATP or GTP and thus represents the only step of substrate-level phosphorylation in the TCA. The beta subunit provides nucleotide specificity of the enzyme and binds the substrate succinate, while the binding sites for coenzyme A and phosphate are found in the alpha subunit. In Leptospira borgpetersenii serovar Hardjo-bovis (strain JB197), this protein is Succinate--CoA ligase [ADP-forming] subunit beta.